The chain runs to 61 residues: Small ribosomal subunit protein uS14 (61 aa).

Zn(2+) is bound by residues Cys-24, Cys-27, Cys-40, and Cys-43.

This sequence belongs to the universal ribosomal protein uS14 family. Zinc-binding uS14 subfamily. In terms of assembly, part of the 30S ribosomal subunit. Contacts proteins S3 and S10. Zn(2+) serves as cofactor.

Its function is as follows. Binds 16S rRNA, required for the assembly of 30S particles and may also be responsible for determining the conformation of the 16S rRNA at the A site. This Carboxydothermus hydrogenoformans (strain ATCC BAA-161 / DSM 6008 / Z-2901) protein is Small ribosomal subunit protein uS14.